Reading from the N-terminus, the 363-residue chain is N-acetylmuramate/N-acetylglucosamine kinase (363 aa).

Belongs to the kinase AmgK family.

The catalysed reaction is N-acetyl-D-muramate + ATP = N-acetyl-alpha-D-muramate 1-phosphate + ADP + H(+). The enzyme catalyses N-acetyl-D-glucosamine + ATP = N-acetyl-alpha-D-glucosamine 1-phosphate + ADP + H(+). It functions in the pathway cell wall biogenesis; peptidoglycan recycling. Functionally, sugar kinase that catalyzes the ATP-dependent phosphorylation of N-acetylmuramate (MurNAc) and N-acetylglucosamine (GlcNAc) at its C1 hydroxyl group, leading to MurNAc alpha-1P and GlcNAc alpha-1P, respectively. Is likely involved in peptidoglycan recycling as part of a cell wall recycling pathway that bypasses de novo biosynthesis of the peptidoglycan precursor UDP-MurNAc. Is able to complement the fosfomycin sensitivity phenotype of a P.putida mutant lacking amgK. In Caulobacter vibrioides (strain ATCC 19089 / CIP 103742 / CB 15) (Caulobacter crescentus), this protein is N-acetylmuramate/N-acetylglucosamine kinase.